Here is a 412-residue protein sequence, read N- to C-terminus: Putative pectate lyase 11 (412 aa).

The N-terminal stretch at 1–24 (MVSYSNNHFAYAFLLLLTIGNTLA) is a signal peptide. Ca(2+)-binding residues include Asp210, Asp234, and Asp238. Arg290 is an active-site residue.

It belongs to the polysaccharide lyase 1 family. Ca(2+) serves as cofactor.

It catalyses the reaction Eliminative cleavage of (1-&gt;4)-alpha-D-galacturonan to give oligosaccharides with 4-deoxy-alpha-D-galact-4-enuronosyl groups at their non-reducing ends.. It participates in glycan metabolism; pectin degradation; 2-dehydro-3-deoxy-D-gluconate from pectin: step 2/5. The sequence is that of Putative pectate lyase 11 from Arabidopsis thaliana (Mouse-ear cress).